We begin with the raw amino-acid sequence, 412 residues long: Alanyl-tRNA editing protein Aarsd1 (412 aa).

H108, H112, C208, and H212 together coordinate Zn(2+).

The protein belongs to the class-II aminoacyl-tRNA synthetase family. Alax-L subfamily. Zn(2+) is required as a cofactor.

Its subcellular location is the cytoplasm. Its function is as follows. Functions in trans to edit the amino acid moiety from incorrectly charged tRNA(Ala). The protein is Alanyl-tRNA editing protein Aarsd1 (aarsd1) of Danio rerio (Zebrafish).